The sequence spans 81 residues: ATP synthase subunit c, chloroplastic (81 aa).

Transmembrane regions (helical) follow at residues 3-23 (PLIS…ASIG) and 57-77 (LAFM…LLFA).

This sequence belongs to the ATPase C chain family. In terms of assembly, F-type ATPases have 2 components, F(1) - the catalytic core - and F(0) - the membrane proton channel. F(1) has five subunits: alpha(3), beta(3), gamma(1), delta(1), epsilon(1). F(0) has four main subunits: a(1), b(1), b'(1) and c(10-14). The alpha and beta chains form an alternating ring which encloses part of the gamma chain. F(1) is attached to F(0) by a central stalk formed by the gamma and epsilon chains, while a peripheral stalk is formed by the delta, b and b' chains.

Its subcellular location is the plastid. The protein resides in the chloroplast thylakoid membrane. In terms of biological role, f(1)F(0) ATP synthase produces ATP from ADP in the presence of a proton or sodium gradient. F-type ATPases consist of two structural domains, F(1) containing the extramembraneous catalytic core and F(0) containing the membrane proton channel, linked together by a central stalk and a peripheral stalk. During catalysis, ATP synthesis in the catalytic domain of F(1) is coupled via a rotary mechanism of the central stalk subunits to proton translocation. Its function is as follows. Key component of the F(0) channel; it plays a direct role in translocation across the membrane. A homomeric c-ring of between 10-14 subunits forms the central stalk rotor element with the F(1) delta and epsilon subunits. This chain is ATP synthase subunit c, chloroplastic, found in Ceratophyllum demersum (Rigid hornwort).